Consider the following 1028-residue polypeptide: Pentatricopeptide repeat-containing protein At3g09040, mitochondrial (1028 aa).

The transit peptide at M1–G30 directs the protein to the mitochondrion. PPR repeat units lie at residues E94–K123, D124–P158, N159–R193, N194–P224, N225–P259, D260–P290, D291–S325, T326–S360, N361–K391, N392–I426, D427–K461, N462–R492, D493–S527, D528–R562, D563–W593, S594–P627, S628–S662, G664–P694, S696–P730, D731–L765, D766–R796, N798–P832, D833–Q863, and R869–K899. Positions L904–E979 are type E motif. The type E(+) motif stretch occupies residues Q980 to K1010.

This sequence belongs to the PPR family. PCMP-E subfamily.

The protein localises to the mitochondrion. This is Pentatricopeptide repeat-containing protein At3g09040, mitochondrial (PCMP-E88) from Arabidopsis thaliana (Mouse-ear cress).